The following is a 380-amino-acid chain: Hydrogenase maturation factor HypD1 (380 aa).

Fe cation is bound by residues cysteine 36, cysteine 64, and cysteine 67.

The protein belongs to the HypD family. The cofactor is [4Fe-4S] cluster.

Its pathway is protein modification; [NiFe] hydrogenase maturation. In terms of biological role, involved in the maturation of [NiFe] hydrogenases. Involved in the biosynthesis of the Fe(CN)(2)CO cofactor. The sequence is that of Hydrogenase maturation factor HypD1 (hypD1) from Bradyrhizobium diazoefficiens (strain JCM 10833 / BCRC 13528 / IAM 13628 / NBRC 14792 / USDA 110).